The chain runs to 195 residues: Calcium channel flower (195 aa).

The next 3 membrane-spanning stretches (helical) occupy residues Leu34–Ile54, Ile66–Glu88, and Ile117–Val137.

The protein belongs to the calcium channel flower family. In terms of assembly, homomultimer. Associates with the dally/ magu complex.

It is found in the cell membrane. The protein resides in the cytoplasmic vesicle. It localises to the secretory vesicle. Its subcellular location is the synaptic vesicle membrane. The protein localises to the presynaptic cell membrane. It is found in the endosome. Its activity is regulated as follows. Channel activity is inhibited by La(3+), which reduces Ca(2+) influx and thus inhibits it's function in promoting activity-dependent bulk endocytosis (ADBE) in response to high stimuli. Functionally, transmembrane protein which mediates synaptic endocytosis, fitness-based cell culling, neuronal culling, morphogen gradient scaling, and calcium transport. Regulates synaptic endocytosis and hence couples exo- with endocytosis. Controls two major modes of synaptic vesicle (SV) endocytosis in the synaptic boutons of neuromuscular junctions (NMJs); Ca(2+) channel-independent Clathrin-mediated endocytosis (CME) in response to mild stimulation, and Ca(2+) channel-dependent activity-dependent bulk endocytosis (ADBE) in response to strong stimulation. Functions in ADBE and subsequent SV reformation from bulk endosomes by initiating Ca(2+) channel-dependent phosphatidylinositol 4,5-bisphosphate (PtdIns(4,5)P2) compartmentalization in synaptic boutons. There it acts at the periactive zone to provide the low Ca(2+) levels required to initiate Calcineurin activation and upregulate PtdIns(4,5)P2. Conversely PtdIns(4,5)P2 enhances fwe Ca(2+) channel-activity, establishing a positive feedback loop that induces PtdIns(4,5)P2 microdomain at the periactive zone. These microdomains trigger bulk membrane invagination (i.e. ADBE) by triggering actin polymerization while also promoting localization of fwe to bulk endosomes, thereby removing the ADBE trigger to reduce endocytosis and prevent excess membrane uptake. PtdIns(4,5)P2 then promotes SV reformation from the bulk endosomes, to coordinate ADBE and subsequent SV reformation. Different combinations of the flower isoforms at the cell membrane are also required for the identification and elimination of suboptimal or supernumerary cells during development, regeneration, and adulthood. Required for the recognition and elimination of unfit cells in the developing wing during cell competition. In the developing pupal retina, mediates the elimination of unwanted postmitotic neurons, including supernumerary photoreceptor neurons that form at the periphery of the retina and are contained within incomplete ommatidia units. Also required for efficient elimination and replacement of old neurons by newly generated neurons during regeneration in the adult brain following mechanical injury. Downstream of the flower fitness fingerprints, cells identified as unwanted or unfit are eliminated via apoptosis through the expression of ahuizotl (azot). However, the cells marked for elimination by the flower isoforms only undergo apoptosis if additional thresholds are met; (1) their neighboring fit/healthy cells express different levels of the fwe isoforms, and (2) the levels of the protective signal SPARC expressed by the loser or unwanted cells are unable to inhibit caspase activation. These additional thresholds for flower-mediated apoptosis, allows useful cells to recover from transient and limited stress before they are unnecessarily eliminated. Functions with dally and magu in a mechanism of scaling, which utilises apoptosis to ensure that the dpp morphogen gradient, which mediates organ growth, remains proportional to the size of the growing wing. In this mechanism, fwe represses dally- and Magu-dependent activity in expanding the gradient, and dally/Magu inhibits fwe-dependent apoptosis to keep cell death rate low. When the levels of these different proteins are optimally regulated the gradient correctly scales with organ growth but when this fails, fwe-mediated apoptosis is activated to trim the developing tissue to match the correct size of the gradient. This is Calcium channel flower from Drosophila ananassae (Fruit fly).